The chain runs to 427 residues: MEPCDLLIHSATQLVTCAGPPGLRRGPAMRELGVIRDGAVAIRGSTIVAVGPGTDVRRRFRASHEIDARGRAVCPGLVDCHTHIVYAGDRVEEFEQRCAGATYQEIMAAGGGILRTMRLTRAATTTELVHAALPRLRQMLSFGTTTAEVKTGYGLERDAELRQLAAIALLDAAQPIELVPTFLAAHAVPPEFTGRADDYIDLVVESMLPLARDWYAVSSFAARAIPLFVDVFCERGAFDVAQSRRVLDAARSLGLPRKAHVDEFVELGGLAMALELGATSVDHLDVTGPSAFTALAASSTVAVLLPLVSLNLGLSHFAAARAMIDAGVAVALSTDANPGSAPSLSLPLTMAIACRYLRMLPAETLIATTVNAAYAIGRGGHVGALMPGMQADLLILAADDYRWLMYELGGMPVAQVIKRGQVVVTNE.

Residues His-81 and His-83 each coordinate Fe(3+). Residues His-81 and His-83 each contribute to the Zn(2+) site. Residues Arg-90, Tyr-153, and His-186 each coordinate 4-imidazolone-5-propanoate. Position 153 (Tyr-153) interacts with N-formimidoyl-L-glutamate. His-260 is a Fe(3+) binding site. His-260 serves as a coordination point for Zn(2+). Residue Glu-263 coordinates 4-imidazolone-5-propanoate. Residue Asp-335 coordinates Fe(3+). Residue Asp-335 coordinates Zn(2+). N-formimidoyl-L-glutamate-binding residues include Asn-337 and Gly-339. Ser-340 contacts 4-imidazolone-5-propanoate.

It belongs to the metallo-dependent hydrolases superfamily. HutI family. Zn(2+) serves as cofactor. Fe(3+) is required as a cofactor.

The protein resides in the cytoplasm. It catalyses the reaction 4-imidazolone-5-propanoate + H2O = N-formimidoyl-L-glutamate. The protein operates within amino-acid degradation; L-histidine degradation into L-glutamate; N-formimidoyl-L-glutamate from L-histidine: step 3/3. In terms of biological role, catalyzes the hydrolytic cleavage of the carbon-nitrogen bond in imidazolone-5-propanoate to yield N-formimidoyl-L-glutamate. It is the third step in the universal histidine degradation pathway. This chain is Imidazolonepropionase, found in Chloroflexus aggregans (strain MD-66 / DSM 9485).